Reading from the N-terminus, the 92-residue chain is Acylphosphatase (92 aa).

One can recognise an Acylphosphatase-like domain in the interval 5 to 92 (QVQLFVRGRV…GDFFDFRITD (88 aa)). Residues Arg20 and Asn38 contribute to the active site.

Belongs to the acylphosphatase family.

The enzyme catalyses an acyl phosphate + H2O = a carboxylate + phosphate + H(+). The chain is Acylphosphatase (acyP) from Sorangium cellulosum (strain So ce56) (Polyangium cellulosum (strain So ce56)).